The chain runs to 554 residues: Urocanate hydratase (554 aa).

NAD(+) contacts are provided by residues 51–52 (GG), Q129, 175–177 (GMG), E195, 241–242 (NA), 262–266 (QTSAH), 272–273 (YL), and Y321. The active site involves C409. G491 provides a ligand contact to NAD(+).

This sequence belongs to the urocanase family. NAD(+) serves as cofactor.

It localises to the cytoplasm. The enzyme catalyses 4-imidazolone-5-propanoate = trans-urocanate + H2O. The protein operates within amino-acid degradation; L-histidine degradation into L-glutamate; N-formimidoyl-L-glutamate from L-histidine: step 2/3. Its function is as follows. Catalyzes the conversion of urocanate to 4-imidazolone-5-propionate. The sequence is that of Urocanate hydratase from Methylobacterium nodulans (strain LMG 21967 / CNCM I-2342 / ORS 2060).